Here is a 445-residue protein sequence, read N- to C-terminus: Anaerobilin synthase (445 aa).

The 236-residue stretch at 52-287 (TASPRKRLVY…LQGCDFMDDA (236 aa)) folds into the Radical SAM core domain. Y61 serves as a coordination point for S-adenosyl-L-methionine. Residues C67 and C71 each coordinate [4Fe-4S] cluster. Residue F73 participates in S-adenosyl-L-methionine binding. Position 74 (C74) interacts with [4Fe-4S] cluster. S-adenosyl-L-methionine contacts are provided by residues G118, 119–120 (GT), E151, Q178, R190, and D215.

Belongs to the anaerobic coproporphyrinogen-III oxidase family. ChuW/HutW subfamily. The cofactor is [4Fe-4S] cluster.

It carries out the reaction 2 reduced [flavodoxin] + heme b + 2 S-adenosyl-L-methionine = anaerobilin + 2 oxidized [flavodoxin] + Fe(2+) + 5'-deoxyadenosine + L-methionine + S-adenosyl-L-homocysteine. Its activity is regulated as follows. Inhibited by exposure to molecular oxygen. Its function is as follows. Involved in heme degradation and iron utilization under anaerobic conditions. Catalyzes a radical-mediated mechanism facilitating iron liberation and the production of the tetrapyrrole product anaerobilin. Can use heme, mesoheme and deuteroheme as substrates. The protein is Anaerobilin synthase of Escherichia coli O157:H7.